Consider the following 479-residue polypeptide: Ribosomal RNA small subunit methyltransferase F (479 aa).

S-adenosyl-L-methionine-binding positions include A125–K131, E149, D176, and D194. C247 acts as the Nucleophile in catalysis.

It belongs to the class I-like SAM-binding methyltransferase superfamily. RsmB/NOP family.

It localises to the cytoplasm. The catalysed reaction is cytidine(1407) in 16S rRNA + S-adenosyl-L-methionine = 5-methylcytidine(1407) in 16S rRNA + S-adenosyl-L-homocysteine + H(+). Specifically methylates the cytosine at position 1407 (m5C1407) of 16S rRNA. In Escherichia coli O139:H28 (strain E24377A / ETEC), this protein is Ribosomal RNA small subunit methyltransferase F.